The following is a 340-amino-acid chain: 4-hydroxy-3-methylbut-2-enyl diphosphate reductase (340 aa).

Cysteine 21 lines the [4Fe-4S] cluster pocket. (2E)-4-hydroxy-3-methylbut-2-enyl diphosphate is bound by residues histidine 50 and histidine 83. 2 residues coordinate dimethylallyl diphosphate: histidine 50 and histidine 83. Histidine 50 and histidine 83 together coordinate isopentenyl diphosphate. Cysteine 105 lines the [4Fe-4S] cluster pocket. Residue histidine 133 coordinates (2E)-4-hydroxy-3-methylbut-2-enyl diphosphate. Histidine 133 is a dimethylallyl diphosphate binding site. Histidine 133 is a binding site for isopentenyl diphosphate. Glutamate 135 serves as the catalytic Proton donor. Threonine 173 is a binding site for (2E)-4-hydroxy-3-methylbut-2-enyl diphosphate. Cysteine 203 is a [4Fe-4S] cluster binding site. Positions 231, 232, 233, and 276 each coordinate (2E)-4-hydroxy-3-methylbut-2-enyl diphosphate. Dimethylallyl diphosphate is bound by residues serine 231, serine 232, asparagine 233, and serine 276. Isopentenyl diphosphate is bound by residues serine 231, serine 232, asparagine 233, and serine 276. Residues 320–340 are disordered; the sequence is KARGEPLTRSATAGDRMNADR.

This sequence belongs to the IspH family. [4Fe-4S] cluster is required as a cofactor.

It catalyses the reaction isopentenyl diphosphate + 2 oxidized [2Fe-2S]-[ferredoxin] + H2O = (2E)-4-hydroxy-3-methylbut-2-enyl diphosphate + 2 reduced [2Fe-2S]-[ferredoxin] + 2 H(+). The catalysed reaction is dimethylallyl diphosphate + 2 oxidized [2Fe-2S]-[ferredoxin] + H2O = (2E)-4-hydroxy-3-methylbut-2-enyl diphosphate + 2 reduced [2Fe-2S]-[ferredoxin] + 2 H(+). Its pathway is isoprenoid biosynthesis; dimethylallyl diphosphate biosynthesis; dimethylallyl diphosphate from (2E)-4-hydroxy-3-methylbutenyl diphosphate: step 1/1. It functions in the pathway isoprenoid biosynthesis; isopentenyl diphosphate biosynthesis via DXP pathway; isopentenyl diphosphate from 1-deoxy-D-xylulose 5-phosphate: step 6/6. In terms of biological role, catalyzes the conversion of 1-hydroxy-2-methyl-2-(E)-butenyl 4-diphosphate (HMBPP) into a mixture of isopentenyl diphosphate (IPP) and dimethylallyl diphosphate (DMAPP). Acts in the terminal step of the DOXP/MEP pathway for isoprenoid precursor biosynthesis. This Acidothermus cellulolyticus (strain ATCC 43068 / DSM 8971 / 11B) protein is 4-hydroxy-3-methylbut-2-enyl diphosphate reductase.